Consider the following 75-residue polypeptide: Large ribosomal subunit protein bL31 (75 aa).

Zn(2+) is bound by residues cysteine 16, cysteine 18, cysteine 38, and cysteine 41.

Belongs to the bacterial ribosomal protein bL31 family. Type A subfamily. Part of the 50S ribosomal subunit. It depends on Zn(2+) as a cofactor.

Functionally, binds the 23S rRNA. The polypeptide is Large ribosomal subunit protein bL31 (Mycolicibacterium smegmatis (strain ATCC 700084 / mc(2)155) (Mycobacterium smegmatis)).